Reading from the N-terminus, the 35-residue chain is Photosystem II reaction center protein M (35 aa).

A helical membrane pass occupies residues 7–27 (GFIATILFVLVPTVFLLILYI).

Belongs to the PsbM family. In terms of assembly, PSII is composed of 1 copy each of membrane proteins PsbA, PsbB, PsbC, PsbD, PsbE, PsbF, PsbH, PsbI, PsbJ, PsbK, PsbL, PsbM, PsbT, PsbX, PsbY, PsbZ, Psb30/Ycf12, peripheral proteins PsbO, CyanoQ (PsbQ), PsbU, PsbV and a large number of cofactors. It forms dimeric complexes.

It localises to the cellular thylakoid membrane. In terms of biological role, one of the components of the core complex of photosystem II (PSII). PSII is a light-driven water:plastoquinone oxidoreductase that uses light energy to abstract electrons from H(2)O, generating O(2) and a proton gradient subsequently used for ATP formation. It consists of a core antenna complex that captures photons, and an electron transfer chain that converts photonic excitation into a charge separation. This subunit is found at the monomer-monomer interface. The protein is Photosystem II reaction center protein M of Crocosphaera subtropica (strain ATCC 51142 / BH68) (Cyanothece sp. (strain ATCC 51142)).